We begin with the raw amino-acid sequence, 68 residues long: Large ribosomal subunit protein uL30 (68 aa).

A disordered region spans residues 1-26 (MSAKKSASKATVTVQQIGSPLRREPS). The segment covering 8 to 18 (SKATVTVQQIG) has biased composition (polar residues).

It belongs to the universal ribosomal protein uL30 family. As to quaternary structure, part of the 50S ribosomal subunit.

In Parvibaculum lavamentivorans (strain DS-1 / DSM 13023 / NCIMB 13966), this protein is Large ribosomal subunit protein uL30.